The sequence spans 434 residues: D-amino acid dehydrogenase (434 aa).

3-17 provides a ligand contact to FAD; it reads VLVLGSGVIGTTSAW.

This sequence belongs to the DadA oxidoreductase family. FAD serves as cofactor.

The enzyme catalyses a D-alpha-amino acid + A + H2O = a 2-oxocarboxylate + AH2 + NH4(+). Its pathway is amino-acid degradation; D-alanine degradation; NH(3) and pyruvate from D-alanine: step 1/1. Oxidative deamination of D-amino acids. This is D-amino acid dehydrogenase from Stenotrophomonas maltophilia (strain R551-3).